The following is a 105-amino-acid chain: Urease subunit beta (105 aa).

It belongs to the urease beta subunit family. Heterotrimer of UreA (gamma), UreB (beta) and UreC (alpha) subunits. Three heterotrimers associate to form the active enzyme.

Its subcellular location is the cytoplasm. The catalysed reaction is urea + 2 H2O + H(+) = hydrogencarbonate + 2 NH4(+). It functions in the pathway nitrogen metabolism; urea degradation; CO(2) and NH(3) from urea (urease route): step 1/1. In Marinobacter nauticus (strain ATCC 700491 / DSM 11845 / VT8) (Marinobacter aquaeolei), this protein is Urease subunit beta.